The following is a 165-amino-acid chain: Transcriptional repressor NrdR (165 aa).

A zinc finger spans residues Cys-3–Cys-34. Residues Leu-46–Asp-136 enclose the ATP-cone domain.

It belongs to the NrdR family. Zn(2+) serves as cofactor.

Negatively regulates transcription of bacterial ribonucleotide reductase nrd genes and operons by binding to NrdR-boxes. The chain is Transcriptional repressor NrdR from Arthrobacter sp. (strain FB24).